Reading from the N-terminus, the 87-residue chain is Selenoprotein W (87 aa).

Positions 10–13 form a cross-link, cysteinyl-selenocysteine (Cys-Sec); redox-active; that stretch reads CGAU. Residue Sec-13 is a non-standard amino acid, selenocysteine. Residue Cys-37 is modified to S-glutathionyl cysteine.

The protein belongs to the SelWTH family. Selenoprotein W subfamily. Interacts with DPYSL2, PRDX1, YWHAB, YWHAG, HSP70 and HSP90. Highest levels detected in skeletal muscle, tongue, heart and brain. Expressed at significantly higher levels in female skeletal muscle than in male and at slightly higher levels in female cardiac muscle than in male (at protein level). Also detected at low levels in liver.

The protein resides in the cytoplasm. Plays a role as a glutathione (GSH)-dependent antioxidant. May be involved in a redox-related process. May play a role in the myopathies of selenium deficiency. In Macaca mulatta (Rhesus macaque), this protein is Selenoprotein W.